The primary structure comprises 788 residues: Protein FAR1-RELATED SEQUENCE 12 (788 aa).

The region spanning 57–133 is the FAR1 1 domain; that stretch reads EFYNAYAART…QKEHNHELGG (77 aa). Residues 127–200 form a disordered region; sequence HNHELGGEGS…GEVSDDHHQT (74 aa). The segment covering 142-151 has biased composition (low complexity); that stretch reads PRPSRAPAPT. Over residues 165–175 the composition is skewed to basic and acidic residues; it reads KVVDESDRETR. An FAR1 2 domain is found at 225–301; the sequence is QFYQAYAEVV…NKDHNHDLEP (77 aa). Residues 399-495 form the MULE domain; the sequence is SVVFDTSYRK…SAWQIREKER (97 aa). The SWIM-type zinc finger occupies 674–710; the sequence is HAVTFSASNLNSSCSCQMFEHEGLLCRHILKVFNLLD.

It belongs to the FHY3/FAR1 family. Expressed in hypocotyls, rosette and cauline leaves, inflorescences stems, flowers and siliques.

The protein resides in the nucleus. Functionally, putative transcription activator involved in regulating light control of development. The sequence is that of Protein FAR1-RELATED SEQUENCE 12 (FRS12) from Arabidopsis thaliana (Mouse-ear cress).